The following is a 553-amino-acid chain: Serine/threonine-protein kinase WNG2 (553 aa).

Disordered regions lie at residues 1 to 20 (MMFP…RLQR) and 88 to 107 (NREP…GGAE). The N-terminal stretch at 1–64 (MMFPAVAAPP…GLSWVSVAVA (64 aa)) is a signal peptide. In terms of domain architecture, Protein kinase spans 125–395 (FKQLRPVDEF…IGEVMEDPFF (271 aa)). Lys186 provides a ligand contact to ATP. The Proton acceptor role is filled by Asp278. Residues 432–553 (REKADAAAKA…GFNKEDAQES (122 aa)) form a disordered region. Residues 438–451 (AAKAADNAEVPAAK) are compositionally biased toward low complexity. 3 stretches are compositionally biased toward basic and acidic residues: residues 465–486 (GDRD…EKGR), 494–524 (EGNH…ENRE), and 531–553 (QREE…AQES).

The protein belongs to the protein kinase superfamily. STE Ser/Thr protein kinase family. WNG subfamily. The cofactor is Mg(2+).

The protein localises to the cytoplasmic granule. It localises to the secreted. Its subcellular location is the parasitophorous vacuole lumen. The catalysed reaction is L-seryl-[protein] + ATP = O-phospho-L-seryl-[protein] + ADP + H(+). It catalyses the reaction L-threonyl-[protein] + ATP = O-phospho-L-threonyl-[protein] + ADP + H(+). Probable serine/threonine-protein kinase. The protein is Serine/threonine-protein kinase WNG2 of Toxoplasma gondii.